The primary structure comprises 458 residues: Argininosuccinate lyase (458 aa).

The protein belongs to the lyase 1 family. Argininosuccinate lyase subfamily.

Its subcellular location is the cytoplasm. The enzyme catalyses 2-(N(omega)-L-arginino)succinate = fumarate + L-arginine. Its pathway is amino-acid biosynthesis; L-arginine biosynthesis; L-arginine from L-ornithine and carbamoyl phosphate: step 3/3. The sequence is that of Argininosuccinate lyase from Heliobacterium mobile (Heliobacillus mobilis).